The following is a 198-amino-acid chain: dCTP deaminase, dUMP-forming (198 aa).

Residues 115-120 (KSSIAR), Asp-133, 141-143 (TLE), Gln-162, Tyr-175, and Lys-184 contribute to the dCTP site. Glu-143 (proton donor/acceptor) is an active-site residue.

This sequence belongs to the dCTP deaminase family. Homotrimer.

The enzyme catalyses dCTP + 2 H2O = dUMP + NH4(+) + diphosphate. It functions in the pathway pyrimidine metabolism; dUMP biosynthesis; dUMP from dCTP: step 1/1. Its function is as follows. Bifunctional enzyme that catalyzes both the deamination of dCTP to dUTP and the hydrolysis of dUTP to dUMP without releasing the toxic dUTP intermediate. The chain is dCTP deaminase, dUMP-forming from Nanoarchaeum equitans (strain Kin4-M).